Reading from the N-terminus, the 297-residue chain is MTVVVEGQQRTHELVIITGMSGAGKTVAIQSFEDLGYYCIDNLPPALLTTFLTLLRDSGKNSTRIAAVMDMRGGNFFDALIGALDHILKEGDIVARILFLDADDATLVRRYKETRRAHPLAVSGLPLDGIKQERALLSEVKGRANFVYNTSNMKPKQLREKIVKEFASEADTIFTVNIMSFGFKHGMPIDADLVFDVRFLKNPYYVEELRPKTGLQTEVSSYVLALEDTQILIQKLTDLFDFMIPLYRQEGKSQLVIAFGCTGGQHRSVTLAEFFGAYLASKENTVITHRDINRRKE.

An ATP-binding site is contributed by 19–26 (GMSGAGKT). GTP is bound at residue 70–73 (DMRG).

Belongs to the RapZ-like family.

Its function is as follows. Displays ATPase and GTPase activities. The protein is Nucleotide-binding protein Bsph_0448 of Lysinibacillus sphaericus (strain C3-41).